The following is a 251-amino-acid chain: Probable transcriptional regulatory protein PMI1113 (251 aa).

This sequence belongs to the TACO1 family.

The protein localises to the cytoplasm. This chain is Probable transcriptional regulatory protein PMI1113, found in Proteus mirabilis (strain HI4320).